The chain runs to 214 residues: Outer membrane lipoprotein MapA (214 aa).

Positions 1–17 (MFKKFLIFIVPILFLSA) are cleaved as a signal peptide. Residue cysteine 18 is the site of N-palmitoyl cysteine attachment. Cysteine 18 carries the S-diacylglycerol cysteine lipid modification.

The protein resides in the cell outer membrane. The sequence is that of Outer membrane lipoprotein MapA (mapA) from Campylobacter jejuni subsp. jejuni serotype O:6 (strain 81116 / NCTC 11828).